Reading from the N-terminus, the 479-residue chain is Ribosomal RNA small subunit methyltransferase F (479 aa).

S-adenosyl-L-methionine is bound by residues 125 to 131, Glu-149, Asp-176, and Asp-194; that span reads AAAPGSK. Catalysis depends on Cys-247, which acts as the Nucleophile.

Belongs to the class I-like SAM-binding methyltransferase superfamily. RsmB/NOP family.

Its subcellular location is the cytoplasm. The catalysed reaction is cytidine(1407) in 16S rRNA + S-adenosyl-L-methionine = 5-methylcytidine(1407) in 16S rRNA + S-adenosyl-L-homocysteine + H(+). Its function is as follows. Specifically methylates the cytosine at position 1407 (m5C1407) of 16S rRNA. The protein is Ribosomal RNA small subunit methyltransferase F of Escherichia coli O157:H7 (strain EC4115 / EHEC).